A 110-amino-acid chain; its full sequence is NADH-quinone oxidoreductase subunit K (110 aa).

The next 3 membrane-spanning stretches (helical) occupy residues 13–33, 38–58, and 70–90; these read VTHG…GIII, ILIL…NFLI, and VFVF…LAIV.

Belongs to the complex I subunit 4L family. In terms of assembly, NDH-1 is composed of 14 different subunits. Subunits NuoA, H, J, K, L, M, N constitute the membrane sector of the complex.

It is found in the cell inner membrane. It carries out the reaction a quinone + NADH + 5 H(+)(in) = a quinol + NAD(+) + 4 H(+)(out). In terms of biological role, NDH-1 shuttles electrons from NADH, via FMN and iron-sulfur (Fe-S) centers, to quinones in the respiratory chain. The immediate electron acceptor for the enzyme in this species is believed to be ubiquinone. Couples the redox reaction to proton translocation (for every two electrons transferred, four hydrogen ions are translocated across the cytoplasmic membrane), and thus conserves the redox energy in a proton gradient. In Francisella tularensis subsp. holarctica (strain FTNF002-00 / FTA), this protein is NADH-quinone oxidoreductase subunit K.